A 426-amino-acid polypeptide reads, in one-letter code: Inhibin beta A chain (426 aa).

The first 20 residues, 1–20 (MPLLWLRGFLLASCWIIVKS), serve as a signal peptide directing secretion. A propeptide spanning residues 21–310 (SPTPGSEGHS…EDHPHRRRRR (290 aa)) is cleaved from the precursor. N165 carries an N-linked (GlcNAc...) asparagine glycan. The segment covering 177-186 (QQQKHPQGSS) has biased composition (polar residues). 2 disordered regions span residues 177–201 (QQQKHPQGSSDTREEAEEADLMEER) and 260–291 (KKKKEEEGEGKKKDGGEAGAGVDEEKEQSHRP). The segment covering 263-275 (KEEEGEGKKKDGG) has biased composition (basic and acidic residues). 4 disulfides stabilise this stretch: C314–C322, C321–C391, C350–C423, and C354–C425.

It belongs to the TGF-beta family. Dimeric, linked by one or more disulfide bonds. Inhibin A is a dimer of alpha/INHA and beta-A/INHBA. Activin A is a homodimer of beta-A/INHBA. Activin AB is a dimer of beta-A/INHBA and beta-B/INHBB. Interacts with FST and FSTL3; these interactions prevent activin A interaction to its type II receptor. Activin A interacts with ACVR2A. Activin A interacts with BMPR2. Inhibin A interacts with ACVR1; this interaction creates a non-signaling complex (NSC) that inhibits ACVR1-mediated BMP signaling. Inhibin A interacts with ACVR2A.

Its subcellular location is the secreted. In terms of biological role, inhibins/activins are involved in regulating a number of diverse functions such as hypothalamic and pituitary hormone secretion, gonadal hormone secretion, germ cell development and maturation, erythroid differentiation, insulin secretion, nerve cell survival, embryonic axial development or bone growth, depending on their subunit composition. Activin A is a homodimer of INHBA that plays a role in several essential biological processes including embryonic development, stem cell maintenance and differentiation, haematopoiesis, cell proliferation and tissue fibrosis. Signals through type I (such as ACVR1B or ACVR1C) and type II receptors (such as ACVR2A, ACVR2B or BMPR2) which, upon ligand binding, phosphorylate SMAD2 and SMAD3 intracellular signaling mediators that form a complex with SMAD4, translocate to the nucleus and modulate gene expression. Can also activate alternative non-canonical intracellular signaling pathways including the p38 MAPK, extracellular signal-regulated kinases 1/2 (ERK1/2) and c-Jun N-terminal kinases (JNKs) to modulate cell migration and differentiation. Alternatively, promotes osteoblastic differentiation via ACVRL1-SMAD1/5/9 pathway. In addition, can engage the type I receptor ACVR1 to form an ACVR1-activin A-type II receptor non-signaling complex (NSC) that renders receptors unavailable for engagement with BMPs, hence resulting in an apparent inhibition of ACVR1-mediated BMP signaling. Functionally, inhibin A is a dimer of alpha/INHA and beta-A/INHBA that functions as a feedback regulator in the hypothalamic-pituitary-gonadal (HPG) axis. Inhibits the secretion of FSH from the anterior pituitary gland by acting on pituitary gonadotrope cells. Antagonizes activin A by binding to the proteoglycan, betaglycan, and forming a stable complex with and, thereby, sequestering type II activin receptors while excluding type I receptor. In Equus caballus (Horse), this protein is Inhibin beta A chain (INHBA).